The primary structure comprises 425 residues: Protein CLP1 homolog (425 aa).

ATP is bound by residues Glu18, Lys59, and 121-126 (DVGKST).

This sequence belongs to the Clp1 family. Clp1 subfamily.

It localises to the nucleus. Functionally, required for endonucleolytic cleavage during polyadenylation-dependent pre-mRNA 3'-end formation. The polypeptide is Protein CLP1 homolog (cbc) (Drosophila pseudoobscura pseudoobscura (Fruit fly)).